The chain runs to 638 residues: Exocyst complex component EXO70A1 (638 aa).

A disordered region spans residues phenylalanine 163–aspartate 190.

The protein belongs to the EXO70 family. The exocyst complex is composed of SEC3, SEC5, SEC6, SEC8, SEC10, EXO70A1 and EXO84B. Interacts with SEC3A and EXO84B. Co-localizes with FPP3/VETH1, FPP2/VETH2 and COG2 in vesicle-like small motile compartments. May interact with COG2.

The protein localises to the cytoplasm. It is found in the cytosol. Its subcellular location is the cytoskeleton. The protein resides in the phragmoplast. It localises to the cell membrane. The protein localises to the secreted. It is found in the cell wall. Functionally, component of the exocyst complex involved in the docking of exocytic vesicles with fusion sites on the plasma membrane during regulated or polarized secretion. Involved in polarized cell growth and organ morphogenesis. Involved in polarized cell growth and organ morphogenesis. During cytokinesis, involved in cell plate initiation, cell plate maturation and formation of new primary cell wall. Participates in polarized pectin delivery required for the polarized development of the mucilage-producing volcano cells of the seed coat. Involved in the recycling and localization of auxin efflux carriers PIN1 and PIN2, and thus in polar auxin transport regulation. Functions in vesicle trafficking in tracheary elements to regulate patterned secondary cell wall (SCW) thickening. This Arabidopsis thaliana (Mouse-ear cress) protein is Exocyst complex component EXO70A1.